The chain runs to 880 residues: Alanine--tRNA ligase (880 aa).

Residues H566, H570, C668, and H672 each coordinate Zn(2+).

It belongs to the class-II aminoacyl-tRNA synthetase family. Zn(2+) is required as a cofactor.

It is found in the cytoplasm. It catalyses the reaction tRNA(Ala) + L-alanine + ATP = L-alanyl-tRNA(Ala) + AMP + diphosphate. Its function is as follows. Catalyzes the attachment of alanine to tRNA(Ala) in a two-step reaction: alanine is first activated by ATP to form Ala-AMP and then transferred to the acceptor end of tRNA(Ala). Also edits incorrectly charged Ser-tRNA(Ala) and Gly-tRNA(Ala) via its editing domain. This is Alanine--tRNA ligase from Nostoc punctiforme (strain ATCC 29133 / PCC 73102).